Here is a 251-residue protein sequence, read N- to C-terminus: HTH-type transcriptional regulator UlaR (251 aa).

Residues 3-58 (EAQRHQILLEMLAQLGFVTVEKVVERLGISPATARRDINKLDESGKLKKVRNGAEA) form the HTH deoR-type domain. Residues 20 to 39 (VTVEKVVERLGISPATARRD) constitute a DNA-binding region (H-T-H motif).

Its subcellular location is the cytoplasm. In terms of biological role, represses ulaG and the ulaABCDEF operon. The sequence is that of HTH-type transcriptional regulator UlaR from Shigella dysenteriae serotype 1 (strain Sd197).